A 24-amino-acid polypeptide reads, in one-letter code: Humanin-like 6 (24 aa).

It belongs to the humanin family. Expressed in skeletal muscle and testis.

The protein localises to the secreted. It localises to the cytoplasm. Its function is as follows. Plays a role as a neuroprotective and antiapoptotic factor. This Homo sapiens (Human) protein is Humanin-like 6.